The sequence spans 260 residues: uncharacterized protein (260 aa).

Residues 1 to 22 (MGYLKRFALYISILVLIVMVAG) form the signal peptide. Residue Cys-23 is the site of N-palmitoyl cysteine attachment. Cys-23 carries S-diacylglycerol cysteine lipidation.

The protein belongs to the staphylococcal tandem lipoprotein family.

It is found in the cell membrane. This is an uncharacterized protein from Staphylococcus aureus (strain bovine RF122 / ET3-1).